A 156-amino-acid chain; its full sequence is Nascent polypeptide-associated complex subunit beta (156 aa).

2 disordered regions span residues 1–42 and 129–156; these read MPID…KDDT and QANE…AEVE. The region spanning 38 to 103 is the NAC-A/B domain; sequence NKDDTKLHNQ…AQEKNLQELF (66 aa).

Belongs to the NAC-beta family. In terms of assembly, part of the nascent polypeptide-associated complex (NAC), consisting of EGD2 and EGD1. NAC associates with ribosomes via EGD1.

It is found in the cytoplasm. Its subcellular location is the nucleus. In terms of biological role, component of the nascent polypeptide-associated complex (NAC), a dynamic component of the ribosomal exit tunnel, protecting the emerging polypeptides from interaction with other cytoplasmic proteins to ensure appropriate nascent protein targeting. The NAC complex also promotes mitochondrial protein import by enhancing productive ribosome interactions with the outer mitochondrial membrane and blocks the inappropriate interaction of ribosomes translating non-secretory nascent polypeptides with translocation sites in the membrane of the endoplasmic reticulum. EGD1 may act as a transcription factor that exert a negative effect on the expression of several genes that are transcribed by RNA polymerase II. The polypeptide is Nascent polypeptide-associated complex subunit beta (EGD1) (Candida glabrata (strain ATCC 2001 / BCRC 20586 / JCM 3761 / NBRC 0622 / NRRL Y-65 / CBS 138) (Yeast)).